A 147-amino-acid polypeptide reads, in one-letter code: MRALIQRVHNARVEVEGAIVGQTGPGLLILLCAMAGDTEAEAEKLITKITKLRIFKDEAGKMNRSLLDIGGGALVVSQFTLSADTSRGNRPGFSAAAPPQEGEALYLHAVDLLRGHGVATQTGQFGADMDVHLVNDGPVTIWMDTSA.

A Gly-cisPro motif, important for rejection of L-amino acids motif is present at residues 137 to 138; the sequence is GP.

Belongs to the DTD family. In terms of assembly, homodimer.

It localises to the cytoplasm. The catalysed reaction is glycyl-tRNA(Ala) + H2O = tRNA(Ala) + glycine + H(+). It catalyses the reaction a D-aminoacyl-tRNA + H2O = a tRNA + a D-alpha-amino acid + H(+). Functionally, an aminoacyl-tRNA editing enzyme that deacylates mischarged D-aminoacyl-tRNAs. Also deacylates mischarged glycyl-tRNA(Ala), protecting cells against glycine mischarging by AlaRS. Acts via tRNA-based rather than protein-based catalysis; rejects L-amino acids rather than detecting D-amino acids in the active site. By recycling D-aminoacyl-tRNA to D-amino acids and free tRNA molecules, this enzyme counteracts the toxicity associated with the formation of D-aminoacyl-tRNA entities in vivo and helps enforce protein L-homochirality. The polypeptide is D-aminoacyl-tRNA deacylase (Jannaschia sp. (strain CCS1)).